Reading from the N-terminus, the 288-residue chain is Elongation factor Ts (288 aa).

Residues 82-85 (TDFV) form an involved in Mg(2+) ion dislocation from EF-Tu region.

Belongs to the EF-Ts family.

The protein localises to the cytoplasm. Functionally, associates with the EF-Tu.GDP complex and induces the exchange of GDP to GTP. It remains bound to the aminoacyl-tRNA.EF-Tu.GTP complex up to the GTP hydrolysis stage on the ribosome. The protein is Elongation factor Ts of Chlorobium phaeovibrioides (strain DSM 265 / 1930) (Prosthecochloris vibrioformis (strain DSM 265)).